A 310-amino-acid chain; its full sequence is Inorganic pyrophosphatase, mitochondrial (310 aa).

The transit peptide at 1–30 directs the protein to the mitochondrion; it reads MNLLRMNALTSKARSIERLKQTLNILSIRN. Mg(2+) contacts are provided by Asp152, Asp157, and Asp189.

The protein belongs to the PPase family. In terms of assembly, homodimer that binds non-covalently to a protein complex in the inner mitochondrial membrane. Mg(2+) serves as cofactor.

It is found in the mitochondrion. The enzyme catalyses diphosphate + H2O = 2 phosphate + H(+). In terms of biological role, involved in energy production. Its activity is stimulated by uncouplers of ATP synthesis. In Saccharomyces cerevisiae (strain ATCC 204508 / S288c) (Baker's yeast), this protein is Inorganic pyrophosphatase, mitochondrial (PPA2).